The following is a 353-amino-acid chain: Photosystem II D2 protein (353 aa).

Thr2 carries the post-translational modification N-acetylthreonine. Thr2 bears the Phosphothreonine mark. Residues 41–61 (CAYFALGGWFTGTTFVTSWYT) form a helical membrane-spanning segment. His118 provides a ligand contact to chlorophyll a. A helical transmembrane segment spans residues 125–141 (GFMLRQFELARSVQLRP). Gln130 and Asn143 together coordinate pheophytin a. A helical membrane pass occupies residues 153 to 166 (VFVSVFLIYPLGQS). His198 provides a ligand contact to chlorophyll a. Residues 208–228 (AALLCAIHGATVENTLFEDGD) form a helical membrane-spanning segment. A plastoquinone contacts are provided by His215 and Phe262. Fe cation is bound at residue His215. His269 provides a ligand contact to Fe cation. The helical transmembrane segment at 279 to 295 (GLWMSAIGVVGLALNLR) threads the bilayer.

It belongs to the reaction center PufL/M/PsbA/D family. As to quaternary structure, PSII is composed of 1 copy each of membrane proteins PsbA, PsbB, PsbC, PsbD, PsbE, PsbF, PsbH, PsbI, PsbJ, PsbK, PsbL, PsbM, PsbT, PsbX, PsbY, PsbZ, Psb30/Ycf12, at least 3 peripheral proteins of the oxygen-evolving complex and a large number of cofactors. It forms dimeric complexes. The D1/D2 heterodimer binds P680, chlorophylls that are the primary electron donor of PSII, and subsequent electron acceptors. It shares a non-heme iron and each subunit binds pheophytin, quinone, additional chlorophylls, carotenoids and lipids. There is also a Cl(-1) ion associated with D1 and D2, which is required for oxygen evolution. The PSII complex binds additional chlorophylls, carotenoids and specific lipids. serves as cofactor.

It localises to the plastid. It is found in the chloroplast thylakoid membrane. It carries out the reaction 2 a plastoquinone + 4 hnu + 2 H2O = 2 a plastoquinol + O2. In terms of biological role, photosystem II (PSII) is a light-driven water:plastoquinone oxidoreductase that uses light energy to abstract electrons from H(2)O, generating O(2) and a proton gradient subsequently used for ATP formation. It consists of a core antenna complex that captures photons, and an electron transfer chain that converts photonic excitation into a charge separation. The D1/D2 (PsbA/PsbD) reaction center heterodimer binds P680, the primary electron donor of PSII as well as several subsequent electron acceptors. D2 is needed for assembly of a stable PSII complex. The chain is Photosystem II D2 protein from Liriodendron tulipifera (Tuliptree).